Reading from the N-terminus, the 291-residue chain is Putative carboxymethylenebutenolidase (291 aa).

The first 40 residues, 1-40 (MTAFDADLRSLAAQTTLSRRTVIATSLATGFALAVQPVAA), serve as a signal peptide directing secretion. Catalysis depends on residues Cys170, Asp227, and His259.

This sequence belongs to the dienelactone hydrolase family.

The enzyme catalyses 2-(5-oxo-2,5-dihydrofuran-2-ylidene)acetate + H2O = 4-oxohex-2-enedioate + H(+). The sequence is that of Putative carboxymethylenebutenolidase from Methylorubrum extorquens (strain ATCC 14718 / DSM 1338 / JCM 2805 / NCIMB 9133 / AM1) (Methylobacterium extorquens).